A 157-amino-acid chain; its full sequence is Protein Smg (157 aa).

This sequence belongs to the Smg family.

The chain is Protein Smg from Pectobacterium atrosepticum (strain SCRI 1043 / ATCC BAA-672) (Erwinia carotovora subsp. atroseptica).